Consider the following 560-residue polypeptide: uncharacterized protein (560 aa).

An ABC transmembrane type-1 domain is found at 1–281; it reads MLWNWVALVG…LGSFFHVAMN (281 aa). The next 7 helical transmembrane spans lie at 2–22, 32–52, 108–128, 138–160, 168–188, 223–243, and 249–269; these read LWNW…SYIL, LLSA…RAFA, IYFG…LTLF, TAII…NKIA, WSIY…LITL, VSLM…TALL, and QLSV…FIPL. The 234-residue stretch at 314-547 folds into the ABC transporter domain; that stretch reads VEIKDLHFSY…QGAYAEMFQQ (234 aa). 347 to 354 is a binding site for ATP; sequence GKSGCGKS.

It belongs to the ABC transporter superfamily.

It is found in the cell inner membrane. This is an uncharacterized protein from Haemophilus influenzae (strain ATCC 51907 / DSM 11121 / KW20 / Rd).